The sequence spans 741 residues: Pentatricopeptide repeat-containing protein At1g05670, mitochondrial (741 aa).

The transit peptide at 1 to 21 (MKKPFTGLLMKRGTLSSFRNF) directs the protein to the mitochondrion. 15 PPR repeats span residues 174–208 (DPRVFDVFFQVLVDFGLLREARRVFEKMLNYGLVL), 209–244 (SVDSCNVYLTRLSKDCYKTATAIIVFREFPEVGVCW), 245–279 (NVASYNIVIHFVCQLGRIKEAHHLLLLMELKGYTP), 280–314 (DVISYSTVVNGYCRFGELDKVWKLIEVMKRKGLKP), 315–349 (NSYIYGSIIGLLCRICKLAEAEEAFSEMIRQGILP), 350–384 (DTVVYTTLIDGFCKRGDIRAASKFFYEMHSRDITP), 385–419 (DVLTYTAIISGFCQIGDMVEAGKLFHEMFCKGLEP), 420–454 (DSVTFTELINGYCKAGHMKDAFRVHNHMIQAGCSP), 455–489 (NVVTYTTLIDGLCKEGDLDSANELLHEMWKIGLQP), 490–524 (NIFTYNSIVNGLCKSGNIEEAVKLVGEFEAAGLNA), 525–559 (DTVTYTTLMDAYCKSGEMDKAQEILKEMLGKGLQP), 560–594 (TIVTFNVLMNGFCLHGMLEDGEKLLNWMLAKGIAP), 595–629 (NATTFNSLVKQYCIRNNLKAATAIYKDMCSRGVGP), 630–664 (DGKTYENLVKGHCKARNMKEAWFLFQEMKGKGFSV), and 665–699 (SVSTYSVLIKGFLKRKKFLEAREVFDQMRREGLAA).

Belongs to the PPR family. P subfamily.

It localises to the mitochondrion. The protein is Pentatricopeptide repeat-containing protein At1g05670, mitochondrial of Arabidopsis thaliana (Mouse-ear cress).